The primary structure comprises 2146 residues: Conidial pigment polyketide synthase alb1 (2146 aa).

The tract at residues 8–244 (YLFGDQTISC…KAPGVSGPYH (237 aa)) is N-terminal acylcarrier protein transacylase domain (SAT). Residues 375–806 (RSKIAIIGMS…GGNTALLMED (432 aa)) form the Ketosynthase family 3 (KS3) domain. Residues Cys547, His682, and His724 each act as for beta-ketoacyl synthase activity in the active site. The tract at residues 911 to 1232 (GFVFTGQGAQ…LSTLHLAGVE (322 aa)) is malonyl-CoA:ACP transacylase (MAT) domain. Ser1001 serves as the catalytic For acyl/malonyl transferase activity. The product template (PT) domain stretch occupies residues 1290–1602 (TTAAQKIVEC…ARKILDTVLP (313 aa)). The segment at 1294 to 1427 (QKIVECREDG…VKLFNCAERE (134 aa)) is N-terminal hotdog fold. A PKS/mFAS DH domain is found at 1294 to 1598 (QKIVECREDG…FQALARKILD (305 aa)). His1326 functions as the Proton acceptor; for dehydratase activity in the catalytic mechanism. Residues 1453-1598 (AHRMQRGMVY…FQALARKILD (146 aa)) form a C-terminal hotdog fold region. The active-site Proton donor; for dehydratase activity is the Asp1511. The segment at 1611 to 1644 (GAPAPAPARPIGEKKAPPPIKVTGPPKPNPSNAR) is disordered. Positions 1627 to 1639 (PPPIKVTGPPKPN) are enriched in pro residues. The Carrier 1 domain occupies 1647 to 1721 (SPVVARALEI…DFKAYLAEKG (75 aa)). Ser1681 carries the O-(pantetheine 4'-phosphoryl)serine modification. Residues 1724-1769 (DSSSPEPSSEPESKFSFNSDASSEASSGLTTPGITSPVKHEAPKGG) form a disordered region. The span at 1738-1750 (FSFNSDASSEASS) shows a compositional bias: low complexity. The Carrier 2 domain maps to 1768–1845 (GGQNKVWKSI…AVQAALDLKP (78 aa)). Ser1805 carries the O-(pantetheine 4'-phosphoryl)serine modification. The claisen cyclase domain stretch occupies residues 1892–2019 (KLFMFPDGSG…SIGLFGDGKR (128 aa)). The For Claisen cyclase activity role is filled by Ser1962.

Its subcellular location is the endosome. The enzyme catalyses 6 malonyl-CoA + acetyl-CoA + 6 H(+) = naphtopyrone YWA1 + 6 CO2 + 7 CoA + H2O. It participates in pigment biosynthesis; melanin biosynthesis. Non-reducing polyketide synthase; part of the gene cluster that mediates the biosynthesis of dihydroxynaphthalene (DHN)-melanin, a bluish-green pigment and a structural component of the conidial wall. The first step of the pathway is the production of the heptaketide naphtopyrone YWA1 by the polyketide synthase alb1 though condensation of acetyl-CoA with malonyl-CoA. The naphtopyrone YWA1 is then converted to the pentaketide 1,3,6,8-tetrahydroxynaphthalene (1,3,6,8-THN) by the heptaketide hydrolyase ayg1 though chain-length shortening. 1,3,6,8-THN is substrate of the hydroxynaphthalene reductase arp2 to yield scytalone. The scytalone dehydratase arp1 then reduces scytalone to 1,3,8-THN. 1,3,8-THN is also substrate of the hydroxynaphthalene reductase arp2 to yield vermelone. Vermelone is further converted by the multicopper oxidase abr1 to 1,8-DHN. Finally the laccase abr2 transforms 1,8-DHN to DHN-melanin. DHN-melanin biosynthesis appears to be initiated in endosomes where early enzymes (abl1, ayg1, arp1 and arp2) localize, with exocytosis leading to melanin deposition on the cell surface where late enzymes (abr1 and abr2) localize. DHN-melanin is an important structural component of the outer cell wall and is required for the presence of conidial surface hydrophobins. DHN-melanin also plays a crucial role in fungal virulence, including a protective role against the host's immune defenses. DHN-melanin protects also conidia against amoeba predation. This Aspergillus fumigatus (strain ATCC MYA-4609 / CBS 101355 / FGSC A1100 / Af293) (Neosartorya fumigata) protein is Conidial pigment polyketide synthase alb1.